We begin with the raw amino-acid sequence, 291 residues long: Shikimate dehydrogenase (NADP(+)) (291 aa).

Shikimate-binding positions include 22–24 (SLS) and threonine 69. Lysine 73 acts as the Proton acceptor in catalysis. Asparagine 94 and aspartate 110 together coordinate shikimate. Residues 131–135 (GSGGA) and leucine 226 each bind NADP(+). A shikimate-binding site is contributed by tyrosine 228. Glycine 249 contacts NADP(+).

The protein belongs to the shikimate dehydrogenase family. In terms of assembly, homodimer.

It catalyses the reaction shikimate + NADP(+) = 3-dehydroshikimate + NADPH + H(+). The protein operates within metabolic intermediate biosynthesis; chorismate biosynthesis; chorismate from D-erythrose 4-phosphate and phosphoenolpyruvate: step 4/7. In terms of biological role, involved in the biosynthesis of the chorismate, which leads to the biosynthesis of aromatic amino acids. Catalyzes the reversible NADPH linked reduction of 3-dehydroshikimate (DHSA) to yield shikimate (SA). The polypeptide is Shikimate dehydrogenase (NADP(+)) (Synechococcus sp. (strain JA-3-3Ab) (Cyanobacteria bacterium Yellowstone A-Prime)).